The primary structure comprises 652 residues: ATP-binding cassette sub-family G member 5 (652 aa).

The disordered stretch occupies residues 1-30 (MSELPFLSPEGARGPHNNRGSQSSLEEGSV). Residues 1-384 (MSELPFLSPE…RVTRNLMRNK (384 aa)) are Cytoplasmic-facing. Residues 18 to 30 (NRGSQSSLEEGSV) are compositionally biased toward polar residues. The region spanning 39-294 (LGVLNVSFSV…FNNCGYPCPE (256 aa)) is the ABC transporter domain. Residue 87-94 (GSSGSGKT) participates in ATP binding. The chain crosses the membrane as a helical span at residues 385–405 (QVVIMRLVQNLIMGLFLIFYL). The region spanning 389–646 (MRLVQNLIMG…ILGMVVFKVR (258 aa)) is the ABC transmembrane type-2 domain. Topologically, residues 406–422 (LRVQNNMLKGAVQDRVG) are extracellular. Residues 423 to 443 (LLYQLVGATPYTGMLNAVNLF) traverse the membrane as a helical segment. The Cytoplasmic segment spans residues 444-468 (PMLRAVSDQESQDGLYQKWQMLLAY). A helical transmembrane segment spans residues 469-490 (VLHALPFSIVATVIFSSVCYWT). The Extracellular portion of the chain corresponds to 491 to 501 (LGLYPEVARFG). Residues 502–522 (YFSAALLAPHLIGEFLTLVLL) form a helical membrane-spanning segment. At 523–529 (GMVQNPN) the chain is on the cytoplasmic side. The chain crosses the membrane as a helical span at residues 530 to 550 (IVNSIVALLSISGLLIGSGFI). Residues 551-624 (RNIEEMPIPL…PGATSRFTTN (74 aa)) lie on the Extracellular side of the membrane. N-linked (GlcNAc...) asparagine glycans are attached at residues Asn-585 and Asn-592. The helical transmembrane segment at 625 to 645 (FLILYSFIPTLVILGMVVFKV) threads the bilayer. The Cytoplasmic portion of the chain corresponds to 646–652 (RDYLISR).

This sequence belongs to the ABC transporter superfamily. ABCG family. Eye pigment precursor importer (TC 3.A.1.204) subfamily. Heterodimer with ABCG8. Mg(2+) is required as a cofactor. In terms of processing, N-glycosylated. N-glycosylation is important for efficient export out of the endoplasmic reticulum. Detected in liver (at protein level). Expressed only in liver and intestine.

The protein resides in the cell membrane. The protein localises to the apical cell membrane. It catalyses the reaction cholesterol(in) + ATP + H2O = cholesterol(out) + ADP + phosphate + H(+). The enzyme catalyses sitosterol(in) + ATP + H2O = sitosterol(out) + ADP + phosphate + H(+). Its function is as follows. ABCG5 and ABCG8 form an obligate heterodimer that mediates Mg(2+)- and ATP-dependent sterol transport across the cell membrane. Plays an essential role in the selective transport of dietary plant sterols and cholesterol in and out of the enterocytes and in the selective sterol excretion by the liver into bile. Required for normal sterol homeostasis. The heterodimer with ABCG8 has ATPase activity. This is ATP-binding cassette sub-family G member 5 from Rattus norvegicus (Rat).